Reading from the N-terminus, the 438-residue chain is 23S rRNA (uracil(1939)-C(5))-methyltransferase RlmD (438 aa).

Positions 8–68 constitute a TRAM domain; it reads KQKTNNVQTI…RQYGHATAKK (61 aa). Residues C81, C87, C90, and C168 each contribute to the [4Fe-4S] cluster site. The S-adenosyl-L-methionine site is built by Q271, F300, N305, E321, D348, and D369. C395 functions as the Nucleophile in the catalytic mechanism.

Belongs to the class I-like SAM-binding methyltransferase superfamily. RNA M5U methyltransferase family. RlmD subfamily.

It carries out the reaction uridine(1939) in 23S rRNA + S-adenosyl-L-methionine = 5-methyluridine(1939) in 23S rRNA + S-adenosyl-L-homocysteine + H(+). Functionally, catalyzes the formation of 5-methyl-uridine at position 1939 (m5U1939) in 23S rRNA. This is 23S rRNA (uracil(1939)-C(5))-methyltransferase RlmD from Haemophilus influenzae (strain 86-028NP).